The sequence spans 236 residues: 7-cyano-7-deazaguanine synthase (236 aa).

An ATP-binding site is contributed by 7-17 (CSGGLDSVSLA). Zn(2+)-binding residues include cysteine 185, cysteine 193, cysteine 196, and cysteine 199.

Belongs to the QueC family. Zn(2+) serves as cofactor.

The enzyme catalyses 7-carboxy-7-deazaguanine + NH4(+) + ATP = 7-cyano-7-deazaguanine + ADP + phosphate + H2O + H(+). Its pathway is purine metabolism; 7-cyano-7-deazaguanine biosynthesis. In terms of biological role, catalyzes the ATP-dependent conversion of 7-carboxy-7-deazaguanine (CDG) to 7-cyano-7-deazaguanine (preQ(0)). This Rhizobium etli (strain CIAT 652) protein is 7-cyano-7-deazaguanine synthase.